Here is a 390-residue protein sequence, read N- to C-terminus: S-adenosylmethionine synthase (390 aa).

Glu12 is a Mg(2+) binding site. Residue His18 coordinates ATP. Glu46 is a binding site for K(+). L-methionine contacts are provided by Glu59 and Gln102. ATP-binding positions include 170 to 172 (DGK), 238 to 241 (SGRF), Asp249, 255 to 256 (RK), Ala272, Lys276, and Lys280. Asp249 lines the L-methionine pocket. Lys280 lines the L-methionine pocket.

It belongs to the AdoMet synthase family. In terms of assembly, homotetramer. Mn(2+) is required as a cofactor. Requires Mg(2+) as cofactor. Co(2+) serves as cofactor. It depends on K(+) as a cofactor.

The protein resides in the cytoplasm. The catalysed reaction is L-methionine + ATP + H2O = S-adenosyl-L-methionine + phosphate + diphosphate. It functions in the pathway amino-acid biosynthesis; S-adenosyl-L-methionine biosynthesis; S-adenosyl-L-methionine from L-methionine: step 1/1. Catalyzes the formation of S-adenosylmethionine from methionine and ATP. The reaction comprises two steps that are both catalyzed by the same enzyme: formation of S-adenosylmethionine (AdoMet) and triphosphate, and subsequent hydrolysis of the triphosphate. This chain is S-adenosylmethionine synthase (METM), found in Chlamydomonas reinhardtii (Chlamydomonas smithii).